Consider the following 248-residue polypeptide: Ubiquinone biosynthesis O-methyltransferase (248 aa).

The S-adenosyl-L-methionine site is built by Arg41, Gly72, Asp93, and Met136.

It belongs to the methyltransferase superfamily. UbiG/COQ3 family.

The enzyme catalyses a 3-demethylubiquinol + S-adenosyl-L-methionine = a ubiquinol + S-adenosyl-L-homocysteine + H(+). It catalyses the reaction a 3-(all-trans-polyprenyl)benzene-1,2-diol + S-adenosyl-L-methionine = a 2-methoxy-6-(all-trans-polyprenyl)phenol + S-adenosyl-L-homocysteine + H(+). It functions in the pathway cofactor biosynthesis; ubiquinone biosynthesis. Functionally, O-methyltransferase that catalyzes the 2 O-methylation steps in the ubiquinone biosynthetic pathway. This chain is Ubiquinone biosynthesis O-methyltransferase, found in Rhizobium rhizogenes (strain K84 / ATCC BAA-868) (Agrobacterium radiobacter).